Consider the following 297-residue polypeptide: Protein COFACTOR ASSEMBLY OF COMPLEX C SUBUNIT B CCB4, chloroplastic (297 aa).

A chloroplast-targeting transit peptide spans 1 to 33 (MEARIILLRIQIPWSANRQFSHPPLDFPRFIRA). The Stromal portion of the chain corresponds to 34-70 (SSSSTSQKPKTYEGPKPRKNLVADFISKNDDLVRSLP). Residues 71–91 (IYVGGASLLAVLFNRTVSGIA) traverse the membrane as a helical segment. Residues 92-103 (PVADASSSQSRA) are Lumenal-facing. A helical transmembrane segment spans residues 104 to 124 (DLLALGLAVTNLLTGLVWLSI). The Stromal segment spans residues 125–297 (RPKSITPVNP…DSDEISRVTV (173 aa)).

It is found in the plastid. Its subcellular location is the chloroplast thylakoid membrane. Required for the biogenesis and accumulation of native cytochrome b6 in the thylakoid membrane. Controls the conversion of apocytochrome b6 to holocytochrome b6. Required for covalent binding of the c-type heme to cytochrome b6. The chain is Protein COFACTOR ASSEMBLY OF COMPLEX C SUBUNIT B CCB4, chloroplastic from Arabidopsis thaliana (Mouse-ear cress).